The chain runs to 73 residues: Putative defensin-like protein 277 (73 aa).

Residues 1-24 form the signal peptide; the sequence is MSAQKIYLASLLLFICLVFPQSTA. Intrachain disulfides connect C27-C64, C33-C52, C39-C62, and C43-C63.

Belongs to the DEFL family.

The protein resides in the secreted. The sequence is that of Putative defensin-like protein 277 from Arabidopsis thaliana (Mouse-ear cress).